We begin with the raw amino-acid sequence, 513 residues long: ATP synthase subunit alpha 1 (513 aa).

169–176 lines the ATP pocket; it reads GDRQTGKT.

It belongs to the ATPase alpha/beta chains family. F-type ATPases have 2 components, CF(1) - the catalytic core - and CF(0) - the membrane proton channel. CF(1) has five subunits: alpha(3), beta(3), gamma(1), delta(1), epsilon(1). CF(0) has three main subunits: a(1), b(2) and c(9-12). The alpha and beta chains form an alternating ring which encloses part of the gamma chain. CF(1) is attached to CF(0) by a central stalk formed by the gamma and epsilon chains, while a peripheral stalk is formed by the delta and b chains.

The protein resides in the cell inner membrane. The enzyme catalyses ATP + H2O + 4 H(+)(in) = ADP + phosphate + 5 H(+)(out). In terms of biological role, produces ATP from ADP in the presence of a proton gradient across the membrane. The alpha chain is a regulatory subunit. The sequence is that of ATP synthase subunit alpha 1 from Nitrosospira multiformis (strain ATCC 25196 / NCIMB 11849 / C 71).